The following is a 495-amino-acid chain: NADH-ubiquinone oxidoreductase chain 4 (495 aa).

The next 11 helical transmembrane spans lie at 9-29, 39-59, 89-109, 139-159, 173-193, 214-234, 272-292, 313-333, 335-355, 367-387, and 413-433; these read YSNL…PLFI, LIGL…RIQF, ISLF…SVGW, LLLF…IIGV, FFLY…LILF, IFLW…VPVH, FPEA…IAII, VAHM…GIGG, ILPM…VGVL, YGGL…FTLA, and LVAT…LWLY.

The protein belongs to the complex I subunit 4 family.

Its subcellular location is the mitochondrion membrane. It catalyses the reaction a ubiquinone + NADH + 5 H(+)(in) = a ubiquinol + NAD(+) + 4 H(+)(out). Its function is as follows. Core subunit of the mitochondrial membrane respiratory chain NADH dehydrogenase (Complex I) that is believed to belong to the minimal assembly required for catalysis. Complex I functions in the transfer of electrons from NADH to the respiratory chain. The immediate electron acceptor for the enzyme is believed to be ubiquinone. In Brassica campestris (Field mustard), this protein is NADH-ubiquinone oxidoreductase chain 4 (ND4).